The chain runs to 231 residues: Large ribosomal subunit protein uL1 (231 aa).

This sequence belongs to the universal ribosomal protein uL1 family. As to quaternary structure, part of the 50S ribosomal subunit.

In terms of biological role, binds directly to 23S rRNA. The L1 stalk is quite mobile in the ribosome, and is involved in E site tRNA release. Protein L1 is also a translational repressor protein, it controls the translation of the L11 operon by binding to its mRNA. The protein is Large ribosomal subunit protein uL1 of Polaromonas naphthalenivorans (strain CJ2).